The primary structure comprises 381 residues: Adenylate cyclase (381 aa).

The tract at residues Met1–Asp30 is disordered. One can recognise a Guanylate cyclase domain in the interval Ala191–Thr300. Residues Asp196 and Asp240 each contribute to the Mg(2+) site.

Belongs to the adenylyl cyclase class-3 family. It depends on Mg(2+) as a cofactor.

The catalysed reaction is ATP = 3',5'-cyclic AMP + diphosphate. The protein is Adenylate cyclase (cya) of Streptomyces coelicolor (strain ATCC BAA-471 / A3(2) / M145).